Consider the following 357-residue polypeptide: MSRPTRLVIEPSALLHNLSQIKHLAPGKKVIAMVKANAYGCGVREVAPVLDGRIEAFGVACLEEALAIRALGVETPCILFQGVFSSDELSVAVENDFACVLHHAKQLEWLIKTPLPYPIKVWVKVNTGMHRLGFKIHELQKVMDALQTCTWVDKNIGLMTHLACADEPHRPENQQQISLFQEISIPGFRQRSIANSAAIISFPDSQADVVRPGIMLYGVSPFANQNARDLGLIPVMRFMSAISAIHDNPSFAQVGYGGTWKSDKPSRIGIVAAGYGDGYPRHISEKTPVWVRGREVSIVGRVSMDMLTIDLTEHPDVEIGDEVELWGTHVLVERIAKSAGTIGYELLCQISERVRYK.

Lys-35 acts as the Proton acceptor; specific for D-alanine in catalysis. N6-(pyridoxal phosphate)lysine is present on Lys-35. Arg-131 provides a ligand contact to substrate. Tyr-256 serves as the catalytic Proton acceptor; specific for L-alanine. Residue Met-304 coordinates substrate.

This sequence belongs to the alanine racemase family. It depends on pyridoxal 5'-phosphate as a cofactor.

The catalysed reaction is L-alanine = D-alanine. The protein operates within amino-acid biosynthesis; D-alanine biosynthesis; D-alanine from L-alanine: step 1/1. Catalyzes the interconversion of L-alanine and D-alanine. May also act on other amino acids. The chain is Alanine racemase (alr) from Legionella pneumophila (strain Lens).